Here is a 522-residue protein sequence, read N- to C-terminus: Protein nucleotidyltransferase YdiU (522 aa).

Residues Gly101, Gly103, Arg104, Lys123, Asp135, Gly136, Arg193, and Arg200 each contribute to the ATP site. Asp270 (proton acceptor) is an active-site residue. The Mg(2+) site is built by Asn271 and Asp280. Asp280 contributes to the ATP binding site.

This sequence belongs to the SELO family. The cofactor is Mg(2+). It depends on Mn(2+) as a cofactor.

The catalysed reaction is L-seryl-[protein] + ATP = 3-O-(5'-adenylyl)-L-seryl-[protein] + diphosphate. The enzyme catalyses L-threonyl-[protein] + ATP = 3-O-(5'-adenylyl)-L-threonyl-[protein] + diphosphate. It catalyses the reaction L-tyrosyl-[protein] + ATP = O-(5'-adenylyl)-L-tyrosyl-[protein] + diphosphate. It carries out the reaction L-histidyl-[protein] + UTP = N(tele)-(5'-uridylyl)-L-histidyl-[protein] + diphosphate. The catalysed reaction is L-seryl-[protein] + UTP = O-(5'-uridylyl)-L-seryl-[protein] + diphosphate. The enzyme catalyses L-tyrosyl-[protein] + UTP = O-(5'-uridylyl)-L-tyrosyl-[protein] + diphosphate. Its function is as follows. Nucleotidyltransferase involved in the post-translational modification of proteins. It can catalyze the addition of adenosine monophosphate (AMP) or uridine monophosphate (UMP) to a protein, resulting in modifications known as AMPylation and UMPylation. In Flavobacterium johnsoniae (strain ATCC 17061 / DSM 2064 / JCM 8514 / BCRC 14874 / CCUG 350202 / NBRC 14942 / NCIMB 11054 / UW101) (Cytophaga johnsonae), this protein is Protein nucleotidyltransferase YdiU.